The sequence spans 331 residues: UPF0194 membrane protein YbhG (331 aa).

Residues 1–19 (MKKPVVIGLAIAAIVTVIA) form the signal peptide. Positions 107–208 (EEIAQAAAAV…LDLQDTTLIA (102 aa)) form a coiled coil.

This sequence belongs to the UPF0194 family.

It localises to the periplasm. This is UPF0194 membrane protein YbhG from Salmonella arizonae (strain ATCC BAA-731 / CDC346-86 / RSK2980).